A 172-amino-acid polypeptide reads, in one-letter code: MDLKQYVSEVQDWPKPGVSFKDITTIMDNGEAYGYATDQIVKYAKDRDVDVVVGPEARGFIIGCPVAYSMGIGFAPVRKEGKLPREVIRYEYDLEYGTNILTMHNDAIKPGQRVLITDDLLATGGTIEAAIKLVEKLGGIVVGIAFIIELKYLNGIEKIKDYDVMSLISYDE.

It belongs to the purine/pyrimidine phosphoribosyltransferase family. As to quaternary structure, homodimer.

The protein localises to the cytoplasm. The enzyme catalyses AMP + diphosphate = 5-phospho-alpha-D-ribose 1-diphosphate + adenine. Its pathway is purine metabolism; AMP biosynthesis via salvage pathway; AMP from adenine: step 1/1. Catalyzes a salvage reaction resulting in the formation of AMP, that is energically less costly than de novo synthesis. In Staphylococcus haemolyticus (strain JCSC1435), this protein is Adenine phosphoribosyltransferase.